A 245-amino-acid chain; its full sequence is Thiopurine S-methyltransferase (245 aa).

29–40 lines the S-adenosyl-L-methionine pocket; sequence WREKWVDGKIGF. Residue Phe-40 coordinates substrate. An N6-acetyllysine modification is found at Lys-58. S-adenosyl-L-methionine contacts are provided by Leu-69, Glu-90, and Arg-152.

This sequence belongs to the class I-like SAM-binding methyltransferase superfamily. TPMT family. In terms of assembly, monomer.

The protein localises to the cytoplasm. The catalysed reaction is S-adenosyl-L-methionine + a thiopurine = S-adenosyl-L-homocysteine + a thiopurine S-methylether.. In Panthera pardus (Leopard), this protein is Thiopurine S-methyltransferase (TPMT).